The primary structure comprises 281 residues: Ermin (281 aa).

3 stretches are compositionally biased toward polar residues: residues 1–12, 21–31, and 135–147; these read MTDTPETLSGTE, NGQQPSSQTRQ, and AQQQLEQRGDAST. 3 disordered regions span residues 1–80, 110–147, and 167–248; these read MTDT…KILN, REGHPWKKIPPNSSNLEVSRQKERTAQQQLEQRGDAST, and KCDE…GDIA. The span at 169–197 shows a compositional bias: acidic residues; sequence DEEEEEEEEVWNEEINEEDVDECAEEEDE. The span at 198–223 shows a compositional bias: basic and acidic residues; that stretch reads VRVIEFKRKHREGSPLKEESLAREDS. Phosphoserine is present on residues Ser-211, Ser-223, Ser-227, and Ser-230. Thr-234 is modified (phosphothreonine). A binds actin region spans residues 262–281; it reads KIRKGNTKQRIDEFESMMHL.

As to quaternary structure, binds actin. In terms of tissue distribution, brain and spinal cord. Exclusively expressed by the oligodendrocytes. Appears at a late stage during myelination, and in the mature nerves, it is localized to the outer cytoplasmic lip of the myelin sheath and the paranodal loops.

It is found in the cytoplasm. The protein resides in the cytoskeleton. Plays a role in cytoskeletal rearrangements during the late wrapping and/or compaction phases of myelinogenesis as well as in maintenance and stability of myelin sheath in the adult. May play an important role in late-stage oligodendroglia maturation, myelin/Ranvier node formation during CNS development, and in the maintenance and plasticity of related structures in the mature CNS. This chain is Ermin (Ermn), found in Mus musculus (Mouse).